We begin with the raw amino-acid sequence, 366 residues long: Fructose-bisphosphate aldolase 1 (366 aa).

Residues arginine 56 and lysine 147 each coordinate substrate. Glutamate 189 serves as the catalytic Proton acceptor. Lysine 231 serves as the catalytic Schiff-base intermediate with dihydroxyacetone-P.

This sequence belongs to the class I fructose-bisphosphate aldolase family. In terms of tissue distribution, ubiquitous.

It carries out the reaction beta-D-fructose 1,6-bisphosphate = D-glyceraldehyde 3-phosphate + dihydroxyacetone phosphate. Its pathway is carbohydrate degradation; glycolysis; D-glyceraldehyde 3-phosphate and glycerone phosphate from D-glucose: step 4/4. Its function is as follows. May be involved in the metabolism of fructose-bisphosphate (beta-D-fructose 1,6-bisphosphate) and of fructose 1-phosphate. The polypeptide is Fructose-bisphosphate aldolase 1 (aldo-1) (Caenorhabditis elegans).